The primary structure comprises 395 residues: Glutamate N-acetyltransferase (395 aa).

The substrate site is built by T146, K169, T180, E263, N390, and T395. The active-site Nucleophile is T180.

The protein belongs to the ArgJ family. Heterotetramer of two alpha and two beta chains.

It is found in the cytoplasm. The catalysed reaction is N(2)-acetyl-L-ornithine + L-glutamate = N-acetyl-L-glutamate + L-ornithine. Its pathway is amino-acid biosynthesis; L-arginine biosynthesis; L-ornithine and N-acetyl-L-glutamate from L-glutamate and N(2)-acetyl-L-ornithine (cyclic): step 1/1. Its function is as follows. Catalyzes the transfer of the acetyl group from N(2)-acetylornithine to glutamate, forming N-acetylglutamate and L-ornithine. This chain is Glutamate N-acetyltransferase, found in Methanosarcina acetivorans (strain ATCC 35395 / DSM 2834 / JCM 12185 / C2A).